The sequence spans 453 residues: Bifunctional protein GlmU (453 aa).

A pyrophosphorylase region spans residues 1–226 (MKFSAVILAA…PIEVEGVNDR (226 aa)). UDP-N-acetyl-alpha-D-glucosamine-binding positions include 8–11 (LAAG), lysine 22, glutamine 73, 78–79 (GT), 100–102 (YGD), glycine 137, glutamate 151, asparagine 166, and asparagine 224. Mg(2+) is bound at residue aspartate 102. Asparagine 224 contacts Mg(2+). The interval 227-247 (AQLARLERAFQAAQAKKLLEQ) is linker. Residues 248 to 453 (GVMLRDPARF…TGWQRPVKKK (206 aa)) are N-acetyltransferase. The UDP-N-acetyl-alpha-D-glucosamine site is built by arginine 330 and lysine 348. Histidine 360 (proton acceptor) is an active-site residue. Residues tyrosine 363 and asparagine 374 each coordinate UDP-N-acetyl-alpha-D-glucosamine. Acetyl-CoA-binding positions include alanine 377, 383-384 (NY), serine 402, alanine 420, and arginine 437.

The protein in the N-terminal section; belongs to the N-acetylglucosamine-1-phosphate uridyltransferase family. It in the C-terminal section; belongs to the transferase hexapeptide repeat family. As to quaternary structure, homotrimer. It depends on Mg(2+) as a cofactor.

Its subcellular location is the cytoplasm. The enzyme catalyses alpha-D-glucosamine 1-phosphate + acetyl-CoA = N-acetyl-alpha-D-glucosamine 1-phosphate + CoA + H(+). The catalysed reaction is N-acetyl-alpha-D-glucosamine 1-phosphate + UTP + H(+) = UDP-N-acetyl-alpha-D-glucosamine + diphosphate. Its pathway is nucleotide-sugar biosynthesis; UDP-N-acetyl-alpha-D-glucosamine biosynthesis; N-acetyl-alpha-D-glucosamine 1-phosphate from alpha-D-glucosamine 6-phosphate (route II): step 2/2. It participates in nucleotide-sugar biosynthesis; UDP-N-acetyl-alpha-D-glucosamine biosynthesis; UDP-N-acetyl-alpha-D-glucosamine from N-acetyl-alpha-D-glucosamine 1-phosphate: step 1/1. The protein operates within bacterial outer membrane biogenesis; LPS lipid A biosynthesis. Its function is as follows. Catalyzes the last two sequential reactions in the de novo biosynthetic pathway for UDP-N-acetylglucosamine (UDP-GlcNAc). The C-terminal domain catalyzes the transfer of acetyl group from acetyl coenzyme A to glucosamine-1-phosphate (GlcN-1-P) to produce N-acetylglucosamine-1-phosphate (GlcNAc-1-P), which is converted into UDP-GlcNAc by the transfer of uridine 5-monophosphate (from uridine 5-triphosphate), a reaction catalyzed by the N-terminal domain. The protein is Bifunctional protein GlmU of Vibrio vulnificus (strain YJ016).